Here is a 466-residue protein sequence, read N- to C-terminus: UDP-N-acetylmuramate--L-alanine ligase (466 aa).

117–123 lines the ATP pocket; the sequence is GTHGKTT.

The protein belongs to the MurCDEF family.

It is found in the cytoplasm. It carries out the reaction UDP-N-acetyl-alpha-D-muramate + L-alanine + ATP = UDP-N-acetyl-alpha-D-muramoyl-L-alanine + ADP + phosphate + H(+). It participates in cell wall biogenesis; peptidoglycan biosynthesis. Its function is as follows. Cell wall formation. The chain is UDP-N-acetylmuramate--L-alanine ligase from Streptomyces griseus subsp. griseus (strain JCM 4626 / CBS 651.72 / NBRC 13350 / KCC S-0626 / ISP 5235).